The sequence spans 418 residues: MLKKDMNIADYDPQLFAAIEDETRRQEEHIELIASENYCSPRVIEAQGTQLTNKYAEGYPGKRYYGGCEHVDIVEELAISRAKELFGATYANVQPHSGSQANAAVFMALLQGGDTVLGMSLAHGGHLTHGSHVSFSGKLYNAVQYGIDETTGQIDYAEVERLAVEHKPKMIIAGFSAYSGIIDWGKFREIADKVGAYLFVDMAHVAGLVAAGIYPNPMPHAHVVTTTTHKTLAGPRGGLILSSINDEDIYKKLNSAVFPGGQGGPLMHVIAAKAVAFKEALDPEFTTYQEQVVVNAKAMARTFIERGYNVVSGGTDNHLFLLDLISKDITGKDADAALGNANITVNKNSVPNDPRSPFVTSGLRIGSPAITRRGFGEEESVQLTHWMCDVLDDISDLAVSERVKGQVLELCAKFPVYG.

(6S)-5,6,7,8-tetrahydrofolate contacts are provided by residues Leu121 and 125–127; that span reads GHL. Lys230 is modified (N6-(pyridoxal phosphate)lysine). Residue 356-358 coordinates (6S)-5,6,7,8-tetrahydrofolate; that stretch reads SPF.

Belongs to the SHMT family. In terms of assembly, homodimer. Requires pyridoxal 5'-phosphate as cofactor.

Its subcellular location is the cytoplasm. The catalysed reaction is (6R)-5,10-methylene-5,6,7,8-tetrahydrofolate + glycine + H2O = (6S)-5,6,7,8-tetrahydrofolate + L-serine. Its pathway is one-carbon metabolism; tetrahydrofolate interconversion. The protein operates within amino-acid biosynthesis; glycine biosynthesis; glycine from L-serine: step 1/1. In terms of biological role, catalyzes the reversible interconversion of serine and glycine with tetrahydrofolate (THF) serving as the one-carbon carrier. This reaction serves as the major source of one-carbon groups required for the biosynthesis of purines, thymidylate, methionine, and other important biomolecules. Also exhibits THF-independent aldolase activity toward beta-hydroxyamino acids, producing glycine and aldehydes, via a retro-aldol mechanism. This chain is Serine hydroxymethyltransferase, found in Shewanella pealeana (strain ATCC 700345 / ANG-SQ1).